Reading from the N-terminus, the 124-residue chain is UPF0382 membrane protein HI_1073 (124 aa).

3 helical membrane passes run 6–26 (LTLVALSGFFCVALGAFAAHG), 70–90 (SMSSWLIGILLFSGSLYALAF), and 95–115 (VIVWITPIGGTLFLIGWISLA).

This sequence belongs to the UPF0382 family.

The protein localises to the cell membrane. The protein is UPF0382 membrane protein HI_1073 of Haemophilus influenzae (strain ATCC 51907 / DSM 11121 / KW20 / Rd).